Reading from the N-terminus, the 291-residue chain is Lys-63-specific deubiquitinase BRCC36 (291 aa).

At A2 the chain carries N-acetylalanine. Positions 12–179 constitute an MPN domain; the sequence is VHLESDAFLV…YTCFQSVQAQ (168 aa). 3 residues coordinate Zn(2+): H122, H124, and D135. The short motif at 122 to 135 is the JAMM motif element; it reads HSHPHITVWPSHVD. Position 233 is a phosphoserine (S233).

Belongs to the peptidase M67A family. BRCC36 subfamily. Component of the ARISC complex, at least composed of UIMC1/RAP80, ABRAXAS1, BRCC3/BRCC36, BABAM2 and BABAM1/NBA1. Component of the BRCA1-A complex, at least composed of BRCA1, BARD1, UIMC1/RAP80, ABRAXAS1, BRCC3/BRCC36, BABAM2 and BABAM1/NBA1. In the BRCA1-A complex, interacts directly with ABRAXAS1 and BABAM2. Component of the BRISC complex, at least composed of ABRAXAS2, BRCC3/BRCC36, BABAM2 and BABAM1/NBA1. Identified in a complex with SHMT2 and the other subunits of the BRISC complex. In the BRISC complex, interacts directly with ABRAXAS2. Identified in a complex with ABRAXAS2 and NUMA1. The BRISC complex interacts with the CSN complex. Component of the BRCA1/BRCA2 containing complex (BRCC), which also contains BRCA1, BRCA2, BARD1, BABAM2 and RAD51. BRCC is a ubiquitin E3 ligase complex that enhances cellular survival following DNA damage. Interacts with BRCA1. Binds polyubiquitin. Interacts with PWWP2B. Interacts with HDAC1; this interaction is enhanced in the presence of PWWP2B. Requires Zn(2+) as cofactor.

The protein resides in the nucleus. It is found in the cytoplasm. Its subcellular location is the cytoskeleton. The protein localises to the spindle pole. In terms of biological role, metalloprotease that specifically cleaves 'Lys-63'-linked polyubiquitin chains. Does not have activity toward 'Lys-48'-linked polyubiquitin chains. Component of the BRCA1-A complex, a complex that specifically recognizes 'Lys-63'-linked ubiquitinated histones H2A and H2AX at DNA lesions sites, leading to target the BRCA1-BARD1 heterodimer to sites of DNA damage at double-strand breaks (DSBs). In the BRCA1-A complex, it specifically removes 'Lys-63'-linked ubiquitin on histones H2A and H2AX, antagonizing the RNF8-dependent ubiquitination at double-strand breaks (DSBs). Catalytic subunit of the BRISC complex, a multiprotein complex that specifically cleaves 'Lys-63'-linked ubiquitin in various substrates. Mediates the specific 'Lys-63'-specific deubiquitination associated with the COP9 signalosome complex (CSN), via the interaction of the BRISC complex with the CSN complex. The BRISC complex is required for normal mitotic spindle assembly and microtubule attachment to kinetochores via its role in deubiquitinating NUMA1. Plays a role in interferon signaling via its role in the deubiquitination of the interferon receptor IFNAR1; deubiquitination increases IFNAR1 activity by enhancing its stability and cell surface expression. Acts as a regulator of the NLRP3 inflammasome by mediating deubiquitination of NLRP3, leading to NLRP3 inflammasome assembly. Down-regulates the response to bacterial lipopolysaccharide (LPS) via its role in IFNAR1 deubiquitination. Deubiquitinates HDAC1 and PWWP2B leading to their stabilization. The protein is Lys-63-specific deubiquitinase BRCC36 (Brcc3) of Rattus norvegicus (Rat).